Reading from the N-terminus, the 165-residue chain is MSILINSTTIGDIIIVSGSVLLLFILIKTFAWKQITGIFEAREQKIANDIDTAEQARQQAEAFATKREEELSNAKTEANQIIDNAKETGLAKGDQIISEAKTEADRLKEKAHQDIAQNKAEALADVKGEVADLTVLLAEKIMVSNLDKEAQSNLIDSYIKKLGDA.

A helical membrane pass occupies residues 7 to 27 (STTIGDIIIVSGSVLLLFILI).

Belongs to the ATPase B chain family. F-type ATPases have 2 components, F(1) - the catalytic core - and F(0) - the membrane proton channel. F(1) has five subunits: alpha(3), beta(3), gamma(1), delta(1), epsilon(1). F(0) has three main subunits: a(1), b(2) and c(10-14). The alpha and beta chains form an alternating ring which encloses part of the gamma chain. F(1) is attached to F(0) by a central stalk formed by the gamma and epsilon chains, while a peripheral stalk is formed by the delta and b chains.

Its subcellular location is the cell membrane. In terms of biological role, f(1)F(0) ATP synthase produces ATP from ADP in the presence of a proton or sodium gradient. F-type ATPases consist of two structural domains, F(1) containing the extramembraneous catalytic core and F(0) containing the membrane proton channel, linked together by a central stalk and a peripheral stalk. During catalysis, ATP synthesis in the catalytic domain of F(1) is coupled via a rotary mechanism of the central stalk subunits to proton translocation. Its function is as follows. Component of the F(0) channel, it forms part of the peripheral stalk, linking F(1) to F(0). The protein is ATP synthase subunit b of Streptococcus agalactiae serotype Ia (strain ATCC 27591 / A909 / CDC SS700).